Reading from the N-terminus, the 199-residue chain is Recombination protein RecR (199 aa).

The C4-type zinc-finger motif lies at 58 to 73 (CSICNNITDVDPCTYC). The Toprim domain occupies 81 to 176 (QVICVVEEPT…RVTRIATGVP (96 aa)).

This sequence belongs to the RecR family.

Its function is as follows. May play a role in DNA repair. It seems to be involved in an RecBC-independent recombinational process of DNA repair. It may act with RecF and RecO. The polypeptide is Recombination protein RecR (Koribacter versatilis (strain Ellin345)).